A 168-amino-acid chain; its full sequence is MIVLGVDPGLANLGLGLVEGDVRKARHLYHVCLTTESAWLMPRRLQYLHEEVARLLAEYRPDAVAIEDQILRRQADVAFKVGQAFGVVQLACAQAGVPIHAYGPMQVKRSLVGTGRADKEQIIYMVKATLGIRELFNNHAADALALALTHLAHQPMRAASTRLAQKSA.

Catalysis depends on residues Asp-7, Glu-67, and His-139. Residues Asp-7, Glu-67, and His-139 each contribute to the Mg(2+) site.

Belongs to the RuvC family. As to quaternary structure, homodimer which binds Holliday junction (HJ) DNA. The HJ becomes 2-fold symmetrical on binding to RuvC with unstacked arms; it has a different conformation from HJ DNA in complex with RuvA. In the full resolvosome a probable DNA-RuvA(4)-RuvB(12)-RuvC(2) complex forms which resolves the HJ. Mg(2+) serves as cofactor.

The protein resides in the cytoplasm. It catalyses the reaction Endonucleolytic cleavage at a junction such as a reciprocal single-stranded crossover between two homologous DNA duplexes (Holliday junction).. Functionally, the RuvA-RuvB-RuvC complex processes Holliday junction (HJ) DNA during genetic recombination and DNA repair. Endonuclease that resolves HJ intermediates. Cleaves cruciform DNA by making single-stranded nicks across the HJ at symmetrical positions within the homologous arms, yielding a 5'-phosphate and a 3'-hydroxyl group; requires a central core of homology in the junction. The consensus cleavage sequence is 5'-(A/T)TT(C/G)-3'. Cleavage occurs on the 3'-side of the TT dinucleotide at the point of strand exchange. HJ branch migration catalyzed by RuvA-RuvB allows RuvC to scan DNA until it finds its consensus sequence, where it cleaves and resolves the cruciform DNA. The protein is Crossover junction endodeoxyribonuclease RuvC of Deinococcus geothermalis (strain DSM 11300 / CIP 105573 / AG-3a).